Reading from the N-terminus, the 864-residue chain is Probable M1 family aminopeptidase 2 (864 aa).

Substrate-binding positions include Glu-149 and 289 to 293; that span reads GAMEN. A Zn(2+)-binding site is contributed by His-325. The active-site Proton acceptor is Glu-326. Positions 329 and 348 each coordinate Zn(2+).

Belongs to the peptidase M1 family. Zn(2+) serves as cofactor.

In Encephalitozoon cuniculi (strain GB-M1) (Microsporidian parasite), this protein is Probable M1 family aminopeptidase 2.